Here is a 307-residue protein sequence, read N- to C-terminus: Plasmodesmata-located protein 2 (307 aa).

The signal sequence occupies residues M1 to V23. Over V24–T275 the chain is Extracellular. Gnk2-homologous domains are found at residues T33–F136 and G141–N240. Disulfide bonds link C40-C114, C90-C99, C102-C127, C149-C218, C194-C203, and C206-C231. Residues S246–S268 show a composition bias toward low complexity. Residues S246–G270 form a disordered region. A helical membrane pass occupies residues V276–A296. The tract at residues V276–A296 is necessary and sufficient for plasmodesmal targeting. Topologically, residues K297–Y307 are cytoplasmic.

Belongs to the cysteine-rich repeat secretory protein family. Plasmodesmata-located proteins (PDLD) subfamily. As to quaternary structure, (Microbial infection) Interacts with Grapevine fanleaf virus (GFLV) 2B-MP. Highly expressed in inflorescence shoot apex. Uniformly expressed within the inflorescence meristem with the exception of a boundary zone between floral primordia and the meristem where the expression is weaker (at protein level).

Its subcellular location is the cell membrane. It localises to the cell junction. The protein localises to the plasmodesma. Its function is as follows. Modulates cell-to-cell trafficking. The chain is Plasmodesmata-located protein 2 from Arabidopsis thaliana (Mouse-ear cress).